We begin with the raw amino-acid sequence, 176 residues long: Large ribosomal subunit protein uL10 (176 aa).

Belongs to the universal ribosomal protein uL10 family. As to quaternary structure, part of the ribosomal stalk of the 50S ribosomal subunit. The N-terminus interacts with L11 and the large rRNA to form the base of the stalk. The C-terminus forms an elongated spine to which L12 dimers bind in a sequential fashion forming a multimeric L10(L12)X complex.

In terms of biological role, forms part of the ribosomal stalk, playing a central role in the interaction of the ribosome with GTP-bound translation factors. The polypeptide is Large ribosomal subunit protein uL10 (Hahella chejuensis (strain KCTC 2396)).